Consider the following 627-residue polypeptide: Neuronal acetylcholine receptor subunit alpha-4 (627 aa).

The first 26 residues, 1–26 (MELGGPGAPRLLPPLLLLLGTGLLRA), serve as a signal peptide directing secretion. Residues 27 to 249 (SSHVETRAHA…RRLPLFYTIN (223 aa)) lie on the Extracellular side of the membrane. Asparagine 57 carries N-linked (GlcNAc...) asparagine glycosylation. Valine 76 and glutamate 78 together coordinate Ca(2+). Asparagine 107 and asparagine 174 each carry an N-linked (GlcNAc...) asparagine glycan. Intrachain disulfides connect cysteine 161–cysteine 175 and cysteine 225–cysteine 226. The helical transmembrane segment at 250–269 (LIIPCLLISCLTVLVFYLPS) threads the bilayer. Cysteine 271 carries S-palmitoyl cysteine lipidation. 2 helical membrane-spanning segments follow: residues 275 to 291 (ITLC…FLLL) and 306 to 330 (IGEY…VLNV). The Cytoplasmic portion of the chain corresponds to 331–600 (HHRSPRTHTM…WKYVAMVIDR (270 aa)). 2 disordered regions span residues 382–481 (PRFW…VEGG) and 496–561 (DDAA…LPLS). Position 424 is a phosphoserine (serine 424). The segment covering 501 to 511 (EADGQAAGALA) has biased composition (low complexity). A phosphoserine mark is found at serine 538 and serine 541. A compositionally biased stretch (polar residues) spans 538-548 (SSVSPSATVKT). A helical transmembrane segment spans residues 601–619 (IFLWMFIIVCLLGTVGLFL).

This sequence belongs to the ligand-gated ion channel (TC 1.A.9) family. Acetylcholine receptor (TC 1.A.9.1) subfamily. Alpha-4/CHRNA4 sub-subfamily. In terms of assembly, neuronal AChR is composed of two different types of subunits: alpha and beta. CHRNA4 forms heteropentameric neuronal acetylcholine receptors with CHRNB2 and CHRNB4, as well as CHRNA5 and CHRNB3 as accesory subunits. Found in two major stoichiometric forms, LS (low agonist sensitivity): (CHRNA4)3:(CHRNB2)2 and HS (high agonist sensitivity): (CHRNA4)2:(CHRNB2)3, the two stoichiometric forms differ in their unitary conductance, calcium permeability, ACh sensitivity and potentiation by divalent cation. Cells produce predominantly an (CHRNA4)3:(CHRNB2)2 nAChR. The (CHRNA4)2:(CHRNB2)3 expression is selectively up-regulated by nicotine and has lower single channel conductance and calcium permeability. In the striatum, also forms CHRNA4:CHRNA6:CHRNB2 complexes. Also found in the stoichiometric form: (CHRNA4:CHRNB2)2:CHRNB3. Interacts with RIC3; which is required for proper folding and assembly. Interacts with LYPD6.

It localises to the synaptic cell membrane. The protein resides in the cell membrane. The catalysed reaction is Ca(2+)(in) = Ca(2+)(out). It carries out the reaction K(+)(in) = K(+)(out). The enzyme catalyses Na(+)(in) = Na(+)(out). Activated by a myriad of ligands such as acetylcholine, cytisine, nicotine, choline and epibatidine. Channel potentiation by calcium is stoichiometry-selective, CHRNA4:CHRNB2 nACh receptor is achieved by calcium association with topographically distinct sites framed by anionic residues within the CHRNA4 subunit and between the CHRNA4 and CHRNB2 subunits. nAChR activity is inhibited by the antagonist alpha-conotoxins BuIA, PnIA, GID and MII, small disulfide-constrained peptides from cone snails. Its function is as follows. Component of neuronal acetylcholine receptors (nAChRs) that function as pentameric, ligand-gated cation channels with high calcium permeability among other activities. nAChRs are excitatory neurotrasnmitter receptors formed by a collection of nAChR subunits known to mediate synaptic transmission in the nervous system and the neuromuscular junction. Each nAchR subunit confers differential attributes to channel properties, including activation, deactivation and desensitization kinetics, pH sensitivity, cation permeability, and binding to allosteric modulators. CHRNA4 forms heteropentameric neuronal acetylcholine receptors with CHRNB2 and CHRNB4, as well as CHRNA5 and CHRNB3 as accesory subunits. Is the most abundant nAChR subtype expressed in the central nervous system. Found in two major stoichiometric forms,(CHRNA4)3:(CHRNB2)2 and (CHRNA4)2:(CHRNB2)3, the two stoichiometric forms differ in their unitary conductance, calcium permeability, ACh sensitivity and potentiation by divalent cation. Involved in the modulation of calcium-dependent signaling pathways, influences the release of neurotransmitters, including dopamine, glutamate and GABA. The protein is Neuronal acetylcholine receptor subunit alpha-4 of Homo sapiens (Human).